The sequence spans 171 residues: uncharacterized protein (171 aa).

Disordered stretches follow at residues Met1–Lys41 and Asp114–Arg147. Residues Ala27–Ser38 show a composition bias toward low complexity. Residues Leu116 to Met125 are compositionally biased toward polar residues.

This is an uncharacterized protein from Mus musculus (Mouse).